The primary structure comprises 215 residues: Urease accessory protein UreG (215 aa).

The segment at 1 to 21 (MNAPASSPARRTKKLPPLRVG) is disordered. 24 to 31 (GPVGSGKT) is a GTP binding site.

The protein belongs to the SIMIBI class G3E GTPase family. UreG subfamily. As to quaternary structure, homodimer. UreD, UreF and UreG form a complex that acts as a GTP-hydrolysis-dependent molecular chaperone, activating the urease apoprotein by helping to assemble the nickel containing metallocenter of UreC. The UreE protein probably delivers the nickel.

Its subcellular location is the cytoplasm. Facilitates the functional incorporation of the urease nickel metallocenter. This process requires GTP hydrolysis, probably effectuated by UreG. The polypeptide is Urease accessory protein UreG (Burkholderia vietnamiensis (strain G4 / LMG 22486) (Burkholderia cepacia (strain R1808))).